The following is a 482-amino-acid chain: Methylenetetrahydrofolate--tRNA-(uracil-5-)-methyltransferase TrmFO (482 aa).

11-16 (GAGLAG) is a binding site for FAD.

Belongs to the MnmG family. TrmFO subfamily. The cofactor is FAD.

Its subcellular location is the cytoplasm. The catalysed reaction is uridine(54) in tRNA + (6R)-5,10-methylene-5,6,7,8-tetrahydrofolate + NADH + H(+) = 5-methyluridine(54) in tRNA + (6S)-5,6,7,8-tetrahydrofolate + NAD(+). The enzyme catalyses uridine(54) in tRNA + (6R)-5,10-methylene-5,6,7,8-tetrahydrofolate + NADPH + H(+) = 5-methyluridine(54) in tRNA + (6S)-5,6,7,8-tetrahydrofolate + NADP(+). Its function is as follows. Catalyzes the folate-dependent formation of 5-methyl-uridine at position 54 (M-5-U54) in all tRNAs. The polypeptide is Methylenetetrahydrofolate--tRNA-(uracil-5-)-methyltransferase TrmFO (Nitratidesulfovibrio vulgaris (strain DP4) (Desulfovibrio vulgaris)).